We begin with the raw amino-acid sequence, 410 residues long: Argininosuccinate synthase (410 aa).

ATP contacts are provided by residues 13–21 and Ala-40; that span reads AYSGGLDTS. L-citrulline-binding residues include Tyr-91 and Ser-96. Gly-121 provides a ligand contact to ATP. Thr-123, Asn-127, and Asp-128 together coordinate L-aspartate. Position 127 (Asn-127) interacts with L-citrulline. L-citrulline is bound by residues Arg-131, Ser-182, Ser-191, Glu-267, and Tyr-279.

It belongs to the argininosuccinate synthase family. Type 1 subfamily. As to quaternary structure, homotetramer.

The protein resides in the cytoplasm. The catalysed reaction is L-citrulline + L-aspartate + ATP = 2-(N(omega)-L-arginino)succinate + AMP + diphosphate + H(+). Its pathway is amino-acid biosynthesis; L-arginine biosynthesis; L-arginine from L-ornithine and carbamoyl phosphate: step 2/3. This chain is Argininosuccinate synthase, found in Maricaulis maris (strain MCS10) (Caulobacter maris).